Consider the following 29-residue polypeptide: Vodo peptide N (29 aa).

The cyclopeptide (Gly-Asn) cross-link spans 1–29; that stretch reads GLPVCGETCTLGKCYTAGCSCSWPVCYRN. Cystine bridges form between Cys-5–Cys-19, Cys-9–Cys-21, and Cys-14–Cys-26.

In terms of processing, this is a cyclic peptide.

Functionally, probably participates in a plant defense mechanism. The protein is Vodo peptide N of Viola odorata (Sweet violet).